We begin with the raw amino-acid sequence, 89 residues long: RNA-binding protein Hfq (89 aa).

The 60-residue stretch at 14–73 folds into the Sm domain; it reads DPYLNALRKEKINVAIYLVNGVKLQGRVDSFDQFVVLLRSNVTQMVYKHAISTIVPARDP.

Belongs to the Hfq family. Homohexamer.

Its function is as follows. RNA chaperone that binds small regulatory RNA (sRNAs) and mRNAs to facilitate mRNA translational regulation in response to envelope stress, environmental stress and changes in metabolite concentrations. Also binds with high specificity to tRNAs. This Hydrogenovibrio crunogenus (strain DSM 25203 / XCL-2) (Thiomicrospira crunogena) protein is RNA-binding protein Hfq.